The chain runs to 302 residues: D-alanine--D-alanine ligase (302 aa).

An ATP-grasp domain is found at 100-295 (KTVFDHHGIL…FNELIAKLIE (196 aa)). 126–180 (QDLEPPVFIKPNSGGSSLGMTFARTAEELEKGIETVFSLGDSALVEEYTKGIEVT) lines the ATP pocket. Asp-250, Glu-262, and Asn-264 together coordinate Mg(2+).

This sequence belongs to the D-alanine--D-alanine ligase family. Requires Mg(2+) as cofactor. The cofactor is Mn(2+).

It is found in the cytoplasm. It carries out the reaction 2 D-alanine + ATP = D-alanyl-D-alanine + ADP + phosphate + H(+). Its pathway is cell wall biogenesis; peptidoglycan biosynthesis. Its function is as follows. Cell wall formation. This Maridesulfovibrio salexigens (strain ATCC 14822 / DSM 2638 / NCIMB 8403 / VKM B-1763) (Desulfovibrio salexigens) protein is D-alanine--D-alanine ligase.